Here is a 132-residue protein sequence, read N- to C-terminus: Large-conductance mechanosensitive channel (132 aa).

3 consecutive transmembrane segments (helical) span residues 14-34 (VVDL…VSSL), 38-58 (IITP…LHFG), and 67-87 (GNFI…FMFV).

It belongs to the MscL family. As to quaternary structure, homopentamer.

It is found in the cell membrane. In terms of biological role, channel that opens in response to stretch forces in the membrane lipid bilayer. May participate in the regulation of osmotic pressure changes within the cell. The protein is Large-conductance mechanosensitive channel of Bacillus cereus (strain B4264).